A 116-amino-acid polypeptide reads, in one-letter code: Ribosome-binding factor A (116 aa).

The protein belongs to the RbfA family. As to quaternary structure, monomer. Binds 30S ribosomal subunits, but not 50S ribosomal subunits or 70S ribosomes.

The protein localises to the cytoplasm. One of several proteins that assist in the late maturation steps of the functional core of the 30S ribosomal subunit. Associates with free 30S ribosomal subunits (but not with 30S subunits that are part of 70S ribosomes or polysomes). Required for efficient processing of 16S rRNA. May interact with the 5'-terminal helix region of 16S rRNA. The chain is Ribosome-binding factor A from Streptococcus pyogenes serotype M3 (strain SSI-1).